The chain runs to 85 residues: Homeobox protein knotted-1-like 4 (85 aa).

Residues 1–21 form the ELK domain; sequence ELKYQLLKKYSGYLSSLRQEF. A DNA-binding region (homeobox; TALE-type) is located at residues 22–85; the sequence is SKKKKKGKLP…NQRKRHWKPS (64 aa).

Belongs to the TALE/KNOX homeobox family. In terms of tissue distribution, strongly expressed in ear inflorescence primordia and shoot meristem. Weakly expressed in embryos. Absent from leaves.

Its subcellular location is the nucleus. In terms of biological role, probably binds to the DNA sequence 5'-TGAC-3'. The protein is Homeobox protein knotted-1-like 4 (KNOX4) of Zea mays (Maize).